Here is a 61-residue protein sequence, read N- to C-terminus: Small ribosomal subunit protein uS14 (61 aa).

Cys-24, Cys-27, Cys-40, and Cys-43 together coordinate Zn(2+).

The protein belongs to the universal ribosomal protein uS14 family. Zinc-binding uS14 subfamily. Part of the 30S ribosomal subunit. Contacts proteins S3 and S10. It depends on Zn(2+) as a cofactor.

Its function is as follows. Binds 16S rRNA, required for the assembly of 30S particles and may also be responsible for determining the conformation of the 16S rRNA at the A site. The sequence is that of Small ribosomal subunit protein uS14 from Brevibacillus brevis (strain 47 / JCM 6285 / NBRC 100599).